The chain runs to 47 residues: Protein DVU_0533 (47 aa).

Residues 18 to 37 (WTYILMGVTLLVYVGYWLFL) traverse the membrane as a helical segment.

The protein localises to the cell membrane. HMWC (high-molecular-weight cytochrome c), ORF2, ORF3, ORF4, ORF5 and ORF6 in the HMC operon form a transmembrane protein complex that allows electron flow from the periplasmic hydrogenase to the cytoplasmic enzymes that catalyze reduction of sulfates. The chain is Protein DVU_0533 from Nitratidesulfovibrio vulgaris (strain ATCC 29579 / DSM 644 / CCUG 34227 / NCIMB 8303 / VKM B-1760 / Hildenborough) (Desulfovibrio vulgaris).